We begin with the raw amino-acid sequence, 468 residues long: MPANSWPDNDSYKELDPLNSLLSEVSTTEESVVETRDLSLPSRFQGRRGKAALVLTIVWSGTIALHLVSWGSIFILGLTTVLGIHALGVVFARPRHYQKEMQGSLPFVSILVAAKNEEAVIAKLARNLCNLEYPNGQYEVWIIDDNSSDKTPHILAELAKEYDKLKVLRRSAQATGGKSGALNQVLPLTQGEIIAVFDADAQVASDMLLHVVPLFQREKVGAVQVRKAIANAKENFWTKGQMAEMSLDIWFQQQRTALGGIGELRGNGQFVRRQALDSCGGWNEETITDDLDLTFRLHLDKWDIECLFYPAVQEEGVTTAIALWHQRNRWAEGGYQRYLDYWDLILKNRMGTRKTWDMLMFMLTMYILPTAAIPDLLMAVVRHRPPMLGPVTGLSVTMSVVGMFAGLRRIRQEQKFQVHTPFVLLLQTMRGTLYMLHWLVVMSSTTARMSFRPKRLKWVKTVHTGSGE.

4 helical membrane-spanning segments follow: residues 51–71 (AALVLTIVWSGTIALHLVSWG), 72–92 (SIFILGLTTVLGIHALGVVFA), 361–381 (FMLTMYILPTAAIPDLLMAVV), and 387–407 (MLGPVTGLSVTMSVVGMFAGL).

This sequence belongs to the glycosyltransferase 2 family. Mg(2+) serves as cofactor.

It is found in the membrane. It carries out the reaction a 1,2-diacyl-sn-glycerol + UDP-alpha-D-glucose = a 1,2-diacyl-3-O-(beta-D-glucopyranosyl)-sn-glycerol + UDP + H(+). Its function is as follows. Glucosyltransferase involved in the biosynthesis of the non-bilayer-forming membrane lipid beta-monoglucosyldiacylglycerol which contributes to regulate the properties and stability of the membrane. Catalyzes the transfer of a glucosyl residue from UDP-Glc to diacylglycerol (DAG) acceptor to form the corresponding beta-glucosyl-DAG (1,2-diacyl-3-O-(beta-D-glucopyranosyl)-sn-glycerol). It can only use UDP-Glc as sugar donor. This is Beta-monoglucosyldiacylglycerol synthase from Trichormus variabilis (strain ATCC 29413 / PCC 7937) (Anabaena variabilis).